The primary structure comprises 362 residues: MPNFEQNQVIAVGLSGGVDSSVAALVLKEKGYEVIGLFMQNWETDSKDPFCTAEQDLSDAKAIADHIGIPLYVVNFSKAYWNHVFQHCLDEFAQGRTPNPDVWCNREIKFKSLLDHAKKLGATHLATGHYACIQNENNEYRLLKSNDSHKDQSYFLHLLNQYQLANSVFPIGGYQKSEVRAIAKKRGFINHAKKDSTGICFIGERKFKDFLNEFLLAQPGNIETSEGKIIGKHDGIMFYTVGQRKGLHIGGRPDAGEAPWYVVDKDVKRNVLIVVQGYEHPLLYSQELTCTNLHWIRDTEPSFPLTCKAKTRCRQADQTCVVTRLDNDHCHVQFEHPQRAITRGQSVVFYLGNECLGGGIIN.

Residues Gly-13–Ser-20 and Met-39 contribute to the ATP site. The segment at Asn-99 to Asp-101 is interaction with target base in tRNA. Cys-104 (nucleophile) is an active-site residue. Cys-104 and Cys-200 are joined by a disulfide. Gly-128 provides a ligand contact to ATP. The tract at residues Lys-150–Gln-152 is interaction with tRNA. Residue Cys-200 is the Cysteine persulfide intermediate of the active site.

This sequence belongs to the MnmA/TRMU family.

It localises to the cytoplasm. The enzyme catalyses S-sulfanyl-L-cysteinyl-[protein] + uridine(34) in tRNA + AH2 + ATP = 2-thiouridine(34) in tRNA + L-cysteinyl-[protein] + A + AMP + diphosphate + H(+). In terms of biological role, catalyzes the 2-thiolation of uridine at the wobble position (U34) of tRNA, leading to the formation of s(2)U34. In Coxiella burnetii (strain RSA 493 / Nine Mile phase I), this protein is tRNA-specific 2-thiouridylase MnmA.